Reading from the N-terminus, the 345-residue chain is uncharacterized protein (345 aa).

Disordered stretches follow at residues 1-58 (MPSP…WRGD) and 139-165 (KTNS…NSPK). Over residues 27-39 (IKGEGSDDGKEKS) the composition is skewed to basic and acidic residues. A compositionally biased stretch (polar residues) spans 154–165 (KQGSAESKNSPK).

It belongs to the MG307/MG309/MG338 family.

This is an uncharacterized protein from Mycoplasma pneumoniae (strain ATCC 29342 / M129 / Subtype 1) (Mycoplasmoides pneumoniae).